The primary structure comprises 278 residues: Urease accessory protein UreD (278 aa).

This sequence belongs to the UreD family. In terms of assembly, ureD, UreF and UreG form a complex that acts as a GTP-hydrolysis-dependent molecular chaperone, activating the urease apoprotein by helping to assemble the nickel containing metallocenter of UreC. The UreE protein probably delivers the nickel.

The protein resides in the cytoplasm. Required for maturation of urease via the functional incorporation of the urease nickel metallocenter. This is Urease accessory protein UreD from Blochmanniella pennsylvanica (strain BPEN).